The primary structure comprises 325 residues: ATP synthase gamma chain (325 aa).

This sequence belongs to the ATPase gamma chain family. F-type ATPases have 2 components, CF(1) - the catalytic core - and CF(0) - the membrane proton channel. CF(1) has five subunits: alpha(3), beta(3), gamma(1), delta(1), epsilon(1). CF(0) has three main subunits: a, b and c.

It is found in the cell membrane. Functionally, produces ATP from ADP in the presence of a proton gradient across the membrane. The gamma chain is believed to be important in regulating ATPase activity and the flow of protons through the CF(0) complex. The sequence is that of ATP synthase gamma chain from Corynebacterium glutamicum (strain R).